We begin with the raw amino-acid sequence, 472 residues long: Glutamate--tRNA ligase (472 aa).

A 'HIGH' region motif is present at residues 10–20; it reads PSPTGYLHVGG. Residues Cys99, Cys101, Cys126, and Asp128 each contribute to the Zn(2+) site. Positions 238–242 match the 'KMSKS' region motif; that stretch reads KLSKR. ATP is bound at residue Lys241.

Belongs to the class-I aminoacyl-tRNA synthetase family. Glutamate--tRNA ligase type 1 subfamily. Monomer. Zn(2+) is required as a cofactor.

The protein localises to the cytoplasm. The enzyme catalyses tRNA(Glu) + L-glutamate + ATP = L-glutamyl-tRNA(Glu) + AMP + diphosphate. Its function is as follows. Catalyzes the attachment of glutamate to tRNA(Glu) in a two-step reaction: glutamate is first activated by ATP to form Glu-AMP and then transferred to the acceptor end of tRNA(Glu). In Photorhabdus laumondii subsp. laumondii (strain DSM 15139 / CIP 105565 / TT01) (Photorhabdus luminescens subsp. laumondii), this protein is Glutamate--tRNA ligase.